Consider the following 419-residue polypeptide: MEATLSLEPAGRSCWDEPLSITVRGLVPEQPVTLRAALRDEKGALFRARALYRADAHGELDLARAPALGGSFTGLEPMGLIWAMEPERPFWRLVKRDVQTPFVVELEVLDGHEPDGGRLLARAVHERHFMAPGVRRVPVREGRVRATLFLPPEPGPFPGIIDLFGVGGGLLEYRASLLAGKGFAVMALAYYNYDDLPKTMETMRIEYFEEAVNYLRGHPEVKGPGIGLLGISKGGELGLAMASFLKGITAAVVINGSVAAVGNTICYKDETIPPVTILRNQVKMTKDGLKDVVDALQSPLVEQKSFIPVERSDTTFLFLVGQDDHNWKSEFYANEISKRLQAHGKEKPQIICYPEAGHYIEPPYFPLCSAGMHLLVGANITFGGEPKPHSVAQLDAWQQLQTFFHKQLGGKSHGVSPKI.

Residues S232, D324, and H358 each act as charge relay system in the active site. At S416 the chain carries Phosphoserine.

The protein belongs to the C/M/P thioester hydrolase family. Monomer. In terms of tissue distribution, expressed in liver.

The protein localises to the cytoplasm. It localises to the cytosol. It carries out the reaction hexadecanoyl-CoA + H2O = hexadecanoate + CoA + H(+). The catalysed reaction is dodecanoyl-CoA + H2O = dodecanoate + CoA + H(+). It catalyses the reaction tetradecanoyl-CoA + H2O = tetradecanoate + CoA + H(+). The enzyme catalyses decanoyl-CoA + H2O = decanoate + CoA + H(+). It carries out the reaction octadecanoyl-CoA + H2O = octadecanoate + CoA + H(+). The catalysed reaction is eicosanoyl-CoA + H2O = eicosanoate + CoA + H(+). It catalyses the reaction (9Z)-octadecenoyl-CoA + H2O = (9Z)-octadecenoate + CoA + H(+). The enzyme catalyses (9Z)-hexadecenoyl-CoA + H2O = (9Z)-hexadecenoate + CoA + H(+). It carries out the reaction (9E)-octadecenoyl-CoA + H2O = (9E)-octadecenoate + CoA + H(+). The protein operates within lipid metabolism; fatty acid metabolism. In terms of biological role, catalyzes the hydrolysis of acyl-CoAs into free fatty acids and coenzyme A (CoASH), regulating their respective intracellular levels. More active towards saturated and unsaturated long chain fatty acyl-CoAs (C12-C20). The sequence is that of Acyl-coenzyme A thioesterase 1 (Acot1) from Rattus norvegicus (Rat).